The primary structure comprises 469 residues: 3-isopropylmalate dehydratase large subunit (469 aa).

[4Fe-4S] cluster is bound by residues cysteine 350, cysteine 410, and cysteine 413.

This sequence belongs to the aconitase/IPM isomerase family. LeuC type 1 subfamily. In terms of assembly, heterodimer of LeuC and LeuD. [4Fe-4S] cluster serves as cofactor.

It catalyses the reaction (2R,3S)-3-isopropylmalate = (2S)-2-isopropylmalate. The protein operates within amino-acid biosynthesis; L-leucine biosynthesis; L-leucine from 3-methyl-2-oxobutanoate: step 2/4. Functionally, catalyzes the isomerization between 2-isopropylmalate and 3-isopropylmalate, via the formation of 2-isopropylmaleate. The sequence is that of 3-isopropylmalate dehydratase large subunit from Rhodopseudomonas palustris (strain TIE-1).